We begin with the raw amino-acid sequence, 256 residues long: Small ribosomal subunit protein uS2 (256 aa).

It belongs to the universal ribosomal protein uS2 family.

This Streptococcus agalactiae serotype III (strain NEM316) protein is Small ribosomal subunit protein uS2.